We begin with the raw amino-acid sequence, 1551 residues long: Dual oxidase 1 (1551 aa).

An N-terminal signal peptide occupies residues 1–21 (MAVYSAVAWILLFGVLASLGA). Residues 22–596 (QNPVSWEVQR…YFKGSGFGFG (575 aa)) lie on the Extracellular side of the membrane. The tract at residues 26-593 (SWEVQRFDGW…VRDYFKGSGF (568 aa)) is peroxidase-like; mediates peroxidase activity. N-linked (GlcNAc...) asparagine glycosylation is found at Asn-94, Asn-342, Asn-354, Asn-461, and Asn-534. A helical transmembrane segment spans residues 597–617 (LTIGTLCCFPLVSLLSAWIVA). Topologically, residues 618–1044 (RLRMRNFKRL…KRFIENYRRH (427 aa)) are cytoplasmic. EF-hand domains lie at 815-850 (PQDM…FMKG), 851-886 (SPEE…FIEI), and 895-930 (QLAE…HDSD). Ca(2+) contacts are provided by Asp-828, Asp-830, Asn-832, Tyr-834, Glu-839, Asp-864, Asp-866, Asn-868, and Glu-875. Positions 956–1248 (YISQEKICPS…GSFALIQMPR (293 aa)) are interaction with TXNDC11. A helical membrane pass occupies residues 1045-1065 (IGCVAVFYTITGALFLERAYY). Residues 1066-1080 (YAFAAHHSGITDTTR) are Extracellular-facing. Residues 1081-1101 (VGIILSRGTAASISFMFSYIL) form a helical membrane-spanning segment. In terms of domain architecture, Ferric oxidoreductase spans 1087–1269 (RGTAASISFM…YVGDKLVSLS (183 aa)). Residues 1102–1136 (LTMCRNLITFLRETFLNRYIPFDAAVDFHRFIAST) lie on the Cytoplasmic side of the membrane. The helical transmembrane segment at 1137 to 1157 (AIILTVLHSAGHVVNVYLFSI) threads the bilayer. At 1158-1188 (SPLSVLSCLFPDLFHDDGSEFPQKYYWWFFQ) the chain is on the extracellular side. A helical transmembrane segment spans residues 1189–1209 (TVPGLTGVLLLLALAIMYVFA). Residues 1210–1226 (SHHFRRRSFRGFWLTHH) are Cytoplasmic-facing. The chain crosses the membrane as a helical span at residues 1227 to 1247 (LYIFLYILLIIHGSFALIQMP). Residue Arg-1248 is a topological domain, extracellular. The chain crosses the membrane as a helical span at residues 1249–1269 (FHIFFLVPAIIYVGDKLVSLS). The FAD-binding FR-type domain maps to 1270–1376 (RKKVEISVVK…DGPFGEGHQE (107 aa)). The Cytoplasmic segment spans residues 1270 to 1551 (RKKVEISVVK…THFSHHYENF (282 aa)).

In the N-terminal section; belongs to the peroxidase family. As to quaternary structure, interacts with TXNDC11, TPO and CYBA. Post-translationally, N-glycosylated. As to expression, expressed in thyrocytes (at protein level).

The protein resides in the apical cell membrane. The enzyme catalyses NADH + O2 + H(+) = H2O2 + NAD(+). The catalysed reaction is NADPH + O2 + H(+) = H2O2 + NADP(+). Its pathway is hormone biosynthesis; thyroid hormone biosynthesis. The NADPH oxidase activity is calcium-dependent. Peroxidase activity is inhibited by aminobenzohydrazide. Functionally, generates hydrogen peroxide which is required for the activity of thyroid peroxidase/TPO and lactoperoxidase/LPO. Plays a role in thyroid hormones synthesis and lactoperoxidase-mediated antimicrobial defense at the surface of mucosa. May have its own peroxidase activity through its N-terminal peroxidase-like domain. This chain is Dual oxidase 1 (Duox1), found in Rattus norvegicus (Rat).